A 398-amino-acid polypeptide reads, in one-letter code: Phosphoglycerate kinase (398 aa).

Substrate-binding positions include 20 to 22 (DLN), Arg35, 58 to 61 (HLGR), Arg118, and Arg155. ATP is bound by residues Lys206, Gly295, Glu326, and 354-357 (GGDS).

It belongs to the phosphoglycerate kinase family. As to quaternary structure, monomer.

It is found in the cytoplasm. It catalyses the reaction (2R)-3-phosphoglycerate + ATP = (2R)-3-phospho-glyceroyl phosphate + ADP. Its pathway is carbohydrate degradation; glycolysis; pyruvate from D-glyceraldehyde 3-phosphate: step 2/5. The polypeptide is Phosphoglycerate kinase (Onion yellows phytoplasma (strain OY-M)).